A 325-amino-acid chain; its full sequence is APIKGYSVTVXLYIFDCQKWSSNYPHKPNFSDATDPKGPWCYTTDYXGAASVTRSGLRGDEQTPHRHTFSPQSFAGLTTACVKGTGEGYRGTAALTVSGKACQAWASQTPGDVYSCQGLVSNYCRNPDGEKLPWCYTTEYCNVPSCTGGPTGSEYHEILTPAQDXYTGIVEDYRGKMSPDAGLEENFCRNPDQDPQGPWCYTXNPEAXPRYCDVLSVVGGXEAQRNSXPRQISLQYGWQTVHVQSIHAEPRGVDIALVKIAPPAQLTACVITXWGETQGTGEDVQFCAGYPEGGTDPVSLVCLEPCVLAPVLVGVVILPXNDRXQ.

Kringle domains follow at residues 80–146 (ACVK…VPSC) and 159–217 (LTPA…VLSV). Intrachain disulfides connect Cys-81–Cys-146, Cys-102–Cys-135, Cys-124–Cys-141, and Cys-188–Cys-212.

The protein belongs to the peptidase S1 family. Plasminogen subfamily.

It is found in the secreted. The enzyme catalyses Preferential cleavage: Lys-|-Xaa &gt; Arg-|-Xaa, higher selectivity than trypsin. Converts fibrin into soluble products.. Functionally, plasmin dissolves the fibrin of blood clots and acts as a proteolytic factor in a variety of other processes including embryonic development, tissue remodeling, tumor invasion, and inflammation. In Petromyzon marinus (Sea lamprey), this protein is Plasminogen.